Reading from the N-terminus, the 346-residue chain is DNA polymerase IV 2 (346 aa).

The region spanning 9–191 is the UmuC domain; sequence ILHVDLDQFL…RTVEALWGVG (183 aa). Residues Asp-13 and Asp-111 each contribute to the Mg(2+) site. Glu-112 is a catalytic residue.

Belongs to the DNA polymerase type-Y family. Monomer. Mg(2+) is required as a cofactor.

The protein resides in the cytoplasm. It catalyses the reaction DNA(n) + a 2'-deoxyribonucleoside 5'-triphosphate = DNA(n+1) + diphosphate. Functionally, poorly processive, error-prone DNA polymerase involved in untargeted mutagenesis. Copies undamaged DNA at stalled replication forks, which arise in vivo from mismatched or misaligned primer ends. These misaligned primers can be extended by PolIV. Exhibits no 3'-5' exonuclease (proofreading) activity. May be involved in translesional synthesis, in conjunction with the beta clamp from PolIII. The chain is DNA polymerase IV 2 (dinB2) from Mycobacterium bovis (strain ATCC BAA-935 / AF2122/97).